The following is a 173-amino-acid chain: Large ribosomal subunit protein uL16 (173 aa).

This sequence belongs to the universal ribosomal protein uL16 family.

The sequence is that of Large ribosomal subunit protein uL16 from Methanosarcina mazei (strain ATCC BAA-159 / DSM 3647 / Goe1 / Go1 / JCM 11833 / OCM 88) (Methanosarcina frisia).